We begin with the raw amino-acid sequence, 413 residues long: 5'-deoxyadenosine deaminase (413 aa).

Zn(2+) is bound by residues His-57 and His-59. Residues Glu-86 and His-171 each contribute to the substrate site. His-198 provides a ligand contact to Zn(2+). Residues Glu-201 and Asp-286 each coordinate substrate. Residue Asp-286 participates in Zn(2+) binding.

It belongs to the metallo-dependent hydrolases superfamily. MTA/SAH deaminase family. As to quaternary structure, homotetramer. Zn(2+) serves as cofactor.

It carries out the reaction 5'-deoxyadenosine + H2O + H(+) = 5'-deoxyinosine + NH4(+). The catalysed reaction is S-adenosyl-L-homocysteine + H2O + H(+) = S-inosyl-L-homocysteine + NH4(+). The enzyme catalyses S-methyl-5'-thioadenosine + H2O + H(+) = S-methyl-5'-thioinosine + NH4(+). It catalyses the reaction adenosine + H2O + H(+) = inosine + NH4(+). It participates in amino-acid biosynthesis; S-adenosyl-L-methionine biosynthesis. In terms of biological role, catalyzes the deamination of three SAM-derived enzymatic products, namely 5'-deoxyadenosine, S-adenosyl-L-homocysteine, and 5'-methylthioadenosine, to produce the inosine analogs. Can also deaminate adenosine. The preferred substrate for this enzyme is 5'-deoxyadenosine, but all these substrates are efficiently deaminated. Likely functions in a S-adenosyl-L-methionine (SAM) recycling pathway from S-adenosyl-L-homocysteine (SAH) produced from SAM-dependent methylation reactions. May also be involved in the recycling of 5'-deoxyadenosine, whereupon the 5'-deoxyribose moiety of 5'-deoxyinosine is further metabolized to deoxyhexoses used for the biosynthesis of aromatic amino acids in methanogens. This Methanothrix thermoacetophila (strain DSM 6194 / JCM 14653 / NBRC 101360 / PT) (Methanosaeta thermophila) protein is 5'-deoxyadenosine deaminase.